The chain runs to 469 residues: Gustatory receptor for sugar taste 64f (469 aa).

The Cytoplasmic portion of the chain corresponds to Met1–Cys117. The chain crosses the membrane as a helical span at residues Phe118 to Leu138. The Extracellular segment spans residues Asn139 to Ser146. Residues Ile147 to Ala167 traverse the membrane as a helical segment. Residues Arg168–Thr199 are Cytoplasmic-facing. A helical transmembrane segment spans residues Ile200–Val220. Residues Ser221–Asn265 lie on the Extracellular side of the membrane. Asn230 carries an N-linked (GlcNAc...) asparagine glycan. Residues Val266–Leu286 form a helical membrane-spanning segment. Residues Ala287 to Ala330 lie on the Cytoplasmic side of the membrane. A helical transmembrane segment spans residues Ile331–Leu351. Topologically, residues Arg352–Ser353 are extracellular. The chain crosses the membrane as a helical span at residues Leu354–Ile374. The Cytoplasmic portion of the chain corresponds to Gly375 to Lys435. Residues Leu436–Glu456 form a helical membrane-spanning segment. At Asp457–Ser469 the chain is on the extracellular side.

This sequence belongs to the insect chemoreceptor superfamily. Gustatory receptor (GR) family. Gr5a subfamily. In terms of tissue distribution, expressed in Gr5a-expressing sugar-sensing cells.

Its subcellular location is the cell membrane. In terms of biological role, one of the few identified sugar gustatory receptors identified so far and which promotes the starvation-induced increase of feeding motivation. Required in combination with Gr64a to detect sucrose, maltose, and glucose. The chain is Gustatory receptor for sugar taste 64f (Gr64f) from Drosophila melanogaster (Fruit fly).